A 49-amino-acid polypeptide reads, in one-letter code: Large ribosomal subunit protein bL33B (49 aa).

The protein belongs to the bacterial ribosomal protein bL33 family.

The protein is Large ribosomal subunit protein bL33B of Bacillus pumilus (strain SAFR-032).